A 77-amino-acid chain; its full sequence is Defensin-like protein (77 aa).

Positions 1–30 (MERGMRLFSSLVLVLLLVTATEMGPKVAEA) are cleaved as a signal peptide. 4 disulfide bridges follow: Cys-33/Cys-77, Cys-44/Cys-64, Cys-50/Cys-71, and Cys-54/Cys-73.

The protein belongs to the DEFL family.

It localises to the secreted. The polypeptide is Defensin-like protein (Nelumbo nucifera (Sacred lotus)).